The sequence spans 507 residues: ATP synthase subunit alpha, mitochondrial (507 aa).

171-178 (GDRQTGKT) is a binding site for ATP.

This sequence belongs to the ATPase alpha/beta chains family. As to quaternary structure, F-type ATPases have 2 components, CF(1) - the catalytic core - and CF(0) - the membrane proton channel. CF(1) has five subunits: alpha(3), beta(3), gamma(1), delta(1), epsilon(1). CF(0) has three main subunits: a, b and c.

The protein localises to the mitochondrion. It is found in the mitochondrion inner membrane. Functionally, mitochondrial membrane ATP synthase (F(1)F(0) ATP synthase or Complex V) produces ATP from ADP in the presence of a proton gradient across the membrane which is generated by electron transport complexes of the respiratory chain. F-type ATPases consist of two structural domains, F(1) - containing the extramembraneous catalytic core, and F(0) - containing the membrane proton channel, linked together by a central stalk and a peripheral stalk. During catalysis, ATP synthesis in the catalytic domain of F(1) is coupled via a rotary mechanism of the central stalk subunits to proton translocation. Subunits alpha and beta form the catalytic core in F(1). Rotation of the central stalk against the surrounding alpha(3)beta(3) subunits leads to hydrolysis of ATP in three separate catalytic sites on the beta subunits. Subunit alpha does not bear the catalytic high-affinity ATP-binding sites. In Raphanus sativus (Radish), this protein is ATP synthase subunit alpha, mitochondrial (ATPA).